Here is a 395-residue protein sequence, read N- to C-terminus: Protein phosphatase methylesterase 1 (395 aa).

Residues Ser-194, Asp-222, and His-348 contribute to the active site.

The protein belongs to the AB hydrolase superfamily.

The enzyme catalyses [phosphatase 2A protein]-C-terminal L-leucine methyl ester + H2O = [phosphatase 2A protein]-C-terminal L-leucine + methanol + H(+). Functionally, demethylates proteins that have been reversibly carboxymethylated. Demethylates the phosphatase PP2A catalytic subunit. This chain is Protein phosphatase methylesterase 1 (PPE1), found in Kluyveromyces lactis (strain ATCC 8585 / CBS 2359 / DSM 70799 / NBRC 1267 / NRRL Y-1140 / WM37) (Yeast).